We begin with the raw amino-acid sequence, 700 residues long: Elongation factor G (700 aa).

The tr-type G domain occupies 10 to 286; the sequence is TKVRNIGIMA…AVIDYLPSPL (277 aa). GTP contacts are provided by residues 19–26, 83–87, and 137–140; these read AHIDAGKT, DTPGH, and NKMD.

Belongs to the TRAFAC class translation factor GTPase superfamily. Classic translation factor GTPase family. EF-G/EF-2 subfamily.

It is found in the cytoplasm. Functionally, catalyzes the GTP-dependent ribosomal translocation step during translation elongation. During this step, the ribosome changes from the pre-translocational (PRE) to the post-translocational (POST) state as the newly formed A-site-bound peptidyl-tRNA and P-site-bound deacylated tRNA move to the P and E sites, respectively. Catalyzes the coordinated movement of the two tRNA molecules, the mRNA and conformational changes in the ribosome. This is Elongation factor G from Kineococcus radiotolerans (strain ATCC BAA-149 / DSM 14245 / SRS30216).